Reading from the N-terminus, the 361-residue chain is POU domain, class 3, transcription factor 4 (361 aa).

Disordered regions lie at residues 99–131 and 144–192; these read PHVA…GQPL and MLEH…PTSD. The segment covering 122 to 131 has biased composition (polar residues); it reads PSITSSGQPL. The span at 165 to 183 shows a compositional bias: basic and acidic residues; it reads VLREPPDHGELGSHHCQDH. Residues 186–260 form the POU-specific domain; the sequence is EETPTSDELE…LLNKWLEEAD (75 aa). Serine 265 is subject to Phosphoserine. Positions 278–337 form a DNA-binding region, homeobox; the sequence is KRKKRTSIEVSVKGVLETHFLKCPKPAAQEISSLADSLQLEKEVVRVWFCNRRQKEKRMT.

This sequence belongs to the POU transcription factor family. Class-3 subfamily. As to quaternary structure, interacts with HNRNPU. As to expression, brain specific.

Its subcellular location is the nucleus. Functionally, probable transcription factor which exert its primary action widely during early neural development and in a very limited set of neurons in the mature brain. The chain is POU domain, class 3, transcription factor 4 (POU3F4) from Homo sapiens (Human).